A 96-amino-acid polypeptide reads, in one-letter code: Co-chaperonin GroES 2 (96 aa).

The protein belongs to the GroES chaperonin family. Heptamer of 7 subunits arranged in a ring. Interacts with the chaperonin GroEL.

It is found in the cytoplasm. In terms of biological role, together with the chaperonin GroEL, plays an essential role in assisting protein folding. The GroEL-GroES system forms a nano-cage that allows encapsulation of the non-native substrate proteins and provides a physical environment optimized to promote and accelerate protein folding. GroES binds to the apical surface of the GroEL ring, thereby capping the opening of the GroEL channel. The sequence is that of Co-chaperonin GroES 2 from Vibrio vulnificus (strain CMCP6).